The sequence spans 405 residues: Adenosylhomocysteinase (405 aa).

Substrate is bound by residues Asp113 and Glu138. 139–141 (TTT) contributes to the NAD(+) binding site. Positions 168 and 172 each coordinate substrate. Residues Asn173, 202-207 (GYGWCG), Glu225, Asn260, 281-283 (AGH), and Asn327 each bind NAD(+).

This sequence belongs to the adenosylhomocysteinase family. The cofactor is NAD(+).

It is found in the cytoplasm. The enzyme catalyses S-adenosyl-L-homocysteine + H2O = L-homocysteine + adenosine. Its pathway is amino-acid biosynthesis; L-homocysteine biosynthesis; L-homocysteine from S-adenosyl-L-homocysteine: step 1/1. Functionally, may play a key role in the regulation of the intracellular concentration of adenosylhomocysteine. This Archaeoglobus fulgidus (strain ATCC 49558 / DSM 4304 / JCM 9628 / NBRC 100126 / VC-16) protein is Adenosylhomocysteinase.